The primary structure comprises 89 residues: Large ribosomal subunit protein bL27 (89 aa).

The disordered stretch occupies residues 1–20; it reads MAHKKAGGSSRNGRDSAGRR.

The protein belongs to the bacterial ribosomal protein bL27 family.

The chain is Large ribosomal subunit protein bL27 from Jannaschia sp. (strain CCS1).